The following is a 473-amino-acid chain: Trigger factor (473 aa).

One can recognise a PPIase FKBP-type domain in the interval 162-243; the sequence is GDFVSIDLSA…VKSIKVRELP (82 aa). The tract at residues 433-473 is disordered; the sequence is TAEFFGPSGEQAEAEQDEAAPAEDATEETDADSDEAADDSK. The span at 444–473 shows a compositional bias: acidic residues; sequence AEAEQDEAAPAEDATEETDADSDEAADDSK.

The protein belongs to the FKBP-type PPIase family. Tig subfamily.

It localises to the cytoplasm. The catalysed reaction is [protein]-peptidylproline (omega=180) = [protein]-peptidylproline (omega=0). In terms of biological role, involved in protein export. Acts as a chaperone by maintaining the newly synthesized protein in an open conformation. Functions as a peptidyl-prolyl cis-trans isomerase. This chain is Trigger factor, found in Mycolicibacterium vanbaalenii (strain DSM 7251 / JCM 13017 / BCRC 16820 / KCTC 9966 / NRRL B-24157 / PYR-1) (Mycobacterium vanbaalenii).